The sequence spans 119 residues: Large ribosomal subunit protein bL20 (119 aa).

It belongs to the bacterial ribosomal protein bL20 family.

Functionally, binds directly to 23S ribosomal RNA and is necessary for the in vitro assembly process of the 50S ribosomal subunit. It is not involved in the protein synthesizing functions of that subunit. The chain is Large ribosomal subunit protein bL20 from Bradyrhizobium sp. (strain ORS 278).